The following is a 466-amino-acid chain: Eukaryotic translation initiation factor 3 subunit M (466 aa).

Residues 40-62 (EISPLLEPLRQQEQSDAEPDRKQ) form a disordered region. A PCI domain is found at 211–378 (AQTHILQALQ…SEFLVHRATY (168 aa)). Positions 424-466 (AAEEAAQGKSNDKGNKSGDRRQRHGNNQQSQQQQQPQEVAAAE) are disordered. Residues 433 to 443 (SNDKGNKSGDR) are compositionally biased toward basic and acidic residues. The segment covering 451 to 460 (QQSQQQQQPQ) has biased composition (low complexity).

The protein belongs to the eIF-3 subunit M family. Component of the eukaryotic translation initiation factor 3 (eIF-3) complex.

It localises to the cytoplasm. Its function is as follows. Component of the eukaryotic translation initiation factor 3 (eIF-3) complex, which is involved in protein synthesis of a specialized repertoire of mRNAs and, together with other initiation factors, stimulates binding of mRNA and methionyl-tRNAi to the 40S ribosome. The eIF-3 complex specifically targets and initiates translation of a subset of mRNAs involved in cell proliferation. This chain is Eukaryotic translation initiation factor 3 subunit M, found in Aspergillus oryzae (strain ATCC 42149 / RIB 40) (Yellow koji mold).